A 277-amino-acid chain; its full sequence is Phosphoenolpyruvate synthase regulatory protein (277 aa).

Position 157–164 (157–164) interacts with ADP; the sequence is GVSRCGKT.

It belongs to the pyruvate, phosphate/water dikinase regulatory protein family. PSRP subfamily.

It catalyses the reaction [pyruvate, water dikinase] + ADP = [pyruvate, water dikinase]-phosphate + AMP + H(+). It carries out the reaction [pyruvate, water dikinase]-phosphate + phosphate + H(+) = [pyruvate, water dikinase] + diphosphate. Functionally, bifunctional serine/threonine kinase and phosphorylase involved in the regulation of the phosphoenolpyruvate synthase (PEPS) by catalyzing its phosphorylation/dephosphorylation. The polypeptide is Phosphoenolpyruvate synthase regulatory protein (Escherichia coli O7:K1 (strain IAI39 / ExPEC)).